The chain runs to 204 residues: LexA repressor (204 aa).

Positions 28–48 (RAEIAQELGFKSPNAAEEHLK) form a DNA-binding region, H-T-H motif. Catalysis depends on for autocatalytic cleavage activity residues Ser-125 and Lys-162.

The protein belongs to the peptidase S24 family. In terms of assembly, homodimer.

The catalysed reaction is Hydrolysis of Ala-|-Gly bond in repressor LexA.. Represses a number of genes involved in the response to DNA damage (SOS response), including recA and lexA. In the presence of single-stranded DNA, RecA interacts with LexA causing an autocatalytic cleavage which disrupts the DNA-binding part of LexA, leading to derepression of the SOS regulon and eventually DNA repair. The polypeptide is LexA repressor (Ectopseudomonas mendocina (strain ymp) (Pseudomonas mendocina)).